A 499-amino-acid chain; its full sequence is Pentatricopeptide repeat-containing protein PPR5, chloroplastic (499 aa).

Low complexity predominate over residues 1–12; that stretch reads MLACPSTSSPWP. A disordered region spans residues 1-28; the sequence is MLACPSTSSPWPQRQPPSPCPGGGGGAT. Residues 1–45 constitute a chloroplast transit peptide; sequence MLACPSTSSPWPQRQPPSPCPGGGGGATRHVALAARSKRRGAGPA. 9 PPR repeats span residues 123–157, 158–193, 198–232, 233–267, 268–302, 303–337, 338–372, 373–407, and 408–442; these read DNGIYSKLISVMGRKGQIRMAMWLFSQMRNSGCKP, DTSVYNSLIGAHLHSRDKTKALAKALGYFEKMKCIE, TIVTYNILLRAFAQAGDTKQVDMLFKDLDESVVSP, DVYTYNGVLDAYGKNGMIKEMESVLVRMKSTQCRP, DVITFNILIDSYGRKQTFDKMEQVFKSLLRSKERP, THPTFNSMITNYGRARLREKAESVVEKMEELGFKP, NYVTQECLIIMYAHCDCVSKARQVFDELVTSQTKV, HLSSLNSMLEAYCMNGLHTEADRLLDTALQQCVVP, and NGSTYKLLYKAYTKANDKLLVQKLLKRMNKQGIVP. The tract at residues 458-499 is disordered; sequence DRKPRTSPGINSASKPSTDSAGDSETATSDKPEVSVWHVAAT. Polar residues predominate over residues 465–484; sequence PGINSASKPSTDSAGDSETA.

Belongs to the PPR family. P subfamily.

It is found in the plastid. The protein resides in the chloroplast. Functionally, involved in the biogenesis of the plastid translation machinery by promoting the splicing of group II introns in chloroplasts. Stabilizes the chloroplast trnG pre-RNA by directly binding to a group II intron, where it protects an endonuclease-sensitive site and stimulates splicing. Binds specific sites within group II intron trnG pre-RNA. Binds with high affinity to the 5'-UTR of the chloroplastic petA mRNA. This chain is Pentatricopeptide repeat-containing protein PPR5, chloroplastic, found in Zea mays (Maize).